The chain runs to 219 residues: Deoxyribose-phosphate aldolase (219 aa).

Aspartate 89 serves as the catalytic Proton donor/acceptor. The active-site Schiff-base intermediate with acetaldehyde is lysine 151. Lysine 180 serves as the catalytic Proton donor/acceptor.

The protein belongs to the DeoC/FbaB aldolase family. DeoC type 1 subfamily.

The protein resides in the cytoplasm. It catalyses the reaction 2-deoxy-D-ribose 5-phosphate = D-glyceraldehyde 3-phosphate + acetaldehyde. It participates in carbohydrate degradation; 2-deoxy-D-ribose 1-phosphate degradation; D-glyceraldehyde 3-phosphate and acetaldehyde from 2-deoxy-alpha-D-ribose 1-phosphate: step 2/2. In terms of biological role, catalyzes a reversible aldol reaction between acetaldehyde and D-glyceraldehyde 3-phosphate to generate 2-deoxy-D-ribose 5-phosphate. This Clostridioides difficile (strain 630) (Peptoclostridium difficile) protein is Deoxyribose-phosphate aldolase.